Reading from the N-terminus, the 248-residue chain is NADP-dependent 3-hydroxy acid dehydrogenase YdfG (248 aa).

NADP(+) is bound by residues 7-12 (GATAGF), 32-33 (RR), 54-55 (DV), and Asn81. Residue Ser134 participates in substrate binding. NADP(+) contacts are provided by residues Tyr147, Lys151, and 177 to 185 (PGLVGGTEF). Tyr147 functions as the Proton acceptor in the catalytic mechanism.

Belongs to the short-chain dehydrogenases/reductases (SDR) family. Homotetramer.

It carries out the reaction 3-hydroxypropanoate + NADP(+) = 3-oxopropanoate + NADPH + H(+). It catalyses the reaction L-allo-threonine + NADP(+) = aminoacetone + CO2 + NADPH. Functionally, NADP-dependent dehydrogenase with broad substrate specificity acting on 3-hydroxy acids. Catalyzes the NADP-dependent oxidation of L-allo-threonine to L-2-amino-3-keto-butyrate, which is spontaneously decarboxylated into aminoacetone. Also acts on D-threonine, L-serine, D-serine, D-3-hydroxyisobutyrate, L-3-hydroxyisobutyrate, D-glycerate and L-glycerate. Able to catalyze the reduction of the malonic semialdehyde to 3-hydroxypropionic acid. YdfG is apparently supplementing RutE, the presumed malonic semialdehyde reductase involved in pyrimidine degradation since both are able to detoxify malonic semialdehyde. This is NADP-dependent 3-hydroxy acid dehydrogenase YdfG from Escherichia coli O6:H1 (strain CFT073 / ATCC 700928 / UPEC).